We begin with the raw amino-acid sequence, 177 residues long: uncharacterized protein (177 aa).

The N-terminal stretch at 1 to 22 (MCGVVVVIVALVPADPLLPAFA) is a signal peptide. Transmembrane regions (helical) follow at residues 31–51 (VFIPFFNISSSIILICSTCVF), 94–114 (ISLMPSFLFPFATLLCLLKFV), and 136–156 (LFPIMLIPPPFLTSSSFLLEI).

The protein localises to the membrane. This is an uncharacterized protein from Saccharomyces cerevisiae (strain ATCC 204508 / S288c) (Baker's yeast).